Consider the following 143-residue polypeptide: Holo-[acyl-carrier-protein] synthase (143 aa).

Residues aspartate 9 and glutamate 63 each contribute to the Mg(2+) site.

It belongs to the P-Pant transferase superfamily. AcpS family. Mg(2+) serves as cofactor.

It localises to the cytoplasm. The enzyme catalyses apo-[ACP] + CoA = holo-[ACP] + adenosine 3',5'-bisphosphate + H(+). In terms of biological role, transfers the 4'-phosphopantetheine moiety from coenzyme A to a Ser of acyl-carrier-protein. This is Holo-[acyl-carrier-protein] synthase from Burkholderia pseudomallei (strain 1106a).